Reading from the N-terminus, the 98-residue chain is Defensin (98 aa).

An N-terminal signal peptide occupies residues 1–19 (MRTFLVTFVLVVVVGVISA). Residues 20–58 (YPSNPVEVEAEDFDAQDPDLQTFQDTFYEVPQVHSRQKR) constitute a propeptide that is removed on maturation. Cystine bridges form between Cys61-Cys88, Cys74-Cys94, and Cys78-Cys96.

In terms of tissue distribution, is synthesized by the fat body and eventually secreted into the hemolymph.

Its subcellular location is the secreted. Its function is as follows. Has antiparasitic activity against promastigote forms of L.major, and antibacterial activity against Gram-positive bacterium S.aureus. Has antifungal activity against the yeasts C.albicans and S.cerevisiae, but not C.glabrata. Has antifungal activity against filamentous fungi A.fumigatus, F.culmorum, F.oxysporum, N.crassa, T.viride and T.mentagrophytes, but not B.bassiana. This is Defensin from Phlebotomus duboscqi (Sandfly).